We begin with the raw amino-acid sequence, 527 residues long: Gustatory receptor for bitter taste 66a (527 aa).

Over 1–46 (MAQAEDAVQPLLQQFQQLFFISKIAGILPQDLEKFRSRNLLEKSRN) the chain is Cytoplasmic. Residues 47–67 (GMIYMLSTLILYVVLYNILIY) traverse the membrane as a helical segment. Residues 68 to 80 (SFGEEDRSLKASQ) lie on the Extracellular side of the membrane. The chain crosses the membrane as a helical span at residues 81 to 101 (STLTFVIGLFLTYIGLIMMVS). The Cytoplasmic portion of the chain corresponds to 102-144 (DQLTALRNQGRIGELYERIRLVDERLYKEGCVMDNSTIGRRIR). Residues 145–165 (IMLIMTVIFELSILVSTYVKL) traverse the membrane as a helical segment. The Extracellular portion of the chain corresponds to 166 to 174 (VDYSQWMSL). A helical transmembrane segment spans residues 175-195 (LWIVSAIPTFINTLDKIWFAV). The Cytoplasmic portion of the chain corresponds to 196–345 (SLYALKERFE…KALNELWSYP (150 aa)). Residues 346 to 366 (ILSLMAYGFLIFTAQLYFLYC) traverse the membrane as a helical segment. The Extracellular segment spans residues 367 to 382 (ATQYQSIPSLFRSAKN). The chain crosses the membrane as a helical span at residues 383 to 403 (PFITVIVLSYTSGKCVYLIYL). Residues 404–460 (SWKTSQASKRTGISLHKCGVVADDNLLYEIVNHLSLKLLNHSVDFSACGFFTLDMET) lie on the Cytoplasmic side of the membrane. Residues 461–481 (LYGVSGGITSYLIILIQFNLA) form a helical membrane-spanning segment. Residues 482 to 527 (AQQAKEAIQTFNSLNDTAGLVGAATDMDNISSTLRDFVTTTMTPAV) lie on the Extracellular side of the membrane. N496 and N510 each carry an N-linked (GlcNAc...) asparagine glycan.

It belongs to the insect chemoreceptor superfamily. Gustatory receptor (GR) family. Gr66a subfamily. Taste hairs in labial palps, labral and cibarial sense organs and forelegs. In larvae, is expressed in neurons of the terminal external chemosensory organ, as well as in the dorsal, ventral, and posterior pharyngeal sense organs.

The protein resides in the cell membrane. In terms of biological role, gustatory receptor required for response to the bitter in taste neurons. Gr66a cells respond to bitter compounds such as caffeine, theophylline, threonine or valine. Flies avoid bitter substances, suggesting that Gr66a neuron activity is sufficient to mediate avoidance behavior. Required for sensing and avoiding N,N-Diethyl-meta-toluamide (DEET), the most widely used insect repellent worldwide, as well as to L-canavanine, a plant-derived insecticide. Gr66a neurons are also involved in the sex-specific perception of molecules inducing male avoidance behavior, probably through sensing 7-tricosene (7-T), a male cuticular pheromone and leading to inhibition of male-male courtship. Finally, also plays a role in oviposition behavior, in which females evaluate their environment and choose to lay eggs on substrates they may find aversive in other contexts. In Drosophila melanogaster (Fruit fly), this protein is Gustatory receptor for bitter taste 66a (Gr66a).